The primary structure comprises 122 residues: Prefoldin subunit 1 (122 aa).

This sequence belongs to the prefoldin subunit beta family. In terms of assembly, heterohexamer of two PFD-alpha type and four PFD-beta type subunits.

Its function is as follows. Binds specifically to cytosolic chaperonin (c-CPN) and transfers target proteins to it. Binds to nascent polypeptide chain and promotes folding in an environment in which there are many competing pathways for nonnative proteins. This is Prefoldin subunit 1 (pfdn1) from Danio rerio (Zebrafish).